Consider the following 755-residue polypeptide: MEVHNSLHCTAPVLSSLQASASGSGTPKKTAASSAAAQNSKQLLDQLSQQQKAQEEAETHSRRDCDSPASSNSEPEKDLDELRDLNGSLTGSGSVGKSNGSLSGASSTTSAPAGTSTPGSANTNGSASGAASLSVVSATAHLKKRITSSRTPTRKAHRIKFYRNGDRFYPGITIPVSNERYRSFESLYEDLTRLLEENVKIPGAVRTIYDMVGKKITALEELEDGQSYVCSCNNENFKKVDYNTSSQPLANLTLANNSRTSSHRLAKLQRPASPLKNGVLNSIAPVPVGGGAAANGSPLNTSRFSERDSVVHPRIVTLIRNGTKPRRIIRLLLNKRNSPSFDHVLTAITQVVRLDTGYVRKVFTLSGVSVLQLSDFFGSDDVFFAYGTERVNTVEDFKLESEEQRAINAIRKTLRTAGTACKGPKPKMPVKSKKAYPPGELKAQAEAQLQASAAPANEDEEQAALLKSTGVEVAELPAAIRDNYTLSQIIGDGNFAIVLKIKDRQTGIPHALKIIDKSKCKGKEHYIDAEVRVMKKLHHPHIISLIMDVDQDTNMYLVLEYVSGGDLFDAITQVTRFSESQSRIMIRHLGSAMSYLHSMGIVHRDIKPENLLVELDDFGNVVQLKLADFGLACEVTEPLYAVCGTPTYVAPEILLEVGYGLKIDVWAAGIILYILLCGFPPFVAPDNQQEPLFDAIISGVYEFPDPYWSDIGDGVRDLIANMLQSDPDVRFTSEDILDHYWTMGNEEIGCGDYSR.

Over residues 18-52 (QASASGSGTPKKTAASSAAAQNSKQLLDQLSQQQK) the composition is skewed to low complexity. The interval 18–128 (QASASGSGTP…GSANTNGSAS (111 aa)) is disordered. Basic and acidic residues-rich tracts occupy residues 53-66 (AQEEAETHSRRDCD) and 74-84 (EPEKDLDELRD). The span at 87–99 (GSLTGSGSVGKSN) shows a compositional bias: polar residues. Residues 100–128 (GSLSGASSTTSAPAGTSTPGSANTNGSAS) show a composition bias toward low complexity. 2 consecutive Doublecortin domains span residues 157-243 (HRIK…VDYN) and 314-397 (RIVT…VEDF). Positions 484 to 742 (YTLSQIIGDG…SEDILDHYWT (259 aa)) constitute a Protein kinase domain. Residues 490 to 498 (IGDGNFAIV) and Lys513 contribute to the ATP site. Residue Asp605 is the Proton acceptor of the active site.

Belongs to the protein kinase superfamily. CAMK Ser/Thr protein kinase family. CaMK subfamily.

It carries out the reaction L-seryl-[protein] + ATP = O-phospho-L-seryl-[protein] + ADP + H(+). It catalyses the reaction L-threonyl-[protein] + ATP = O-phospho-L-threonyl-[protein] + ADP + H(+). The chain is Serine/threonine-protein kinase GA29083 from Drosophila pseudoobscura pseudoobscura (Fruit fly).